Here is a 397-residue protein sequence, read N- to C-terminus: Tryptophan synthase beta chain (397 aa).

Residue Lys-91 is modified to N6-(pyridoxal phosphate)lysine.

It belongs to the TrpB family. As to quaternary structure, tetramer of two alpha and two beta chains. Pyridoxal 5'-phosphate is required as a cofactor.

It catalyses the reaction (1S,2R)-1-C-(indol-3-yl)glycerol 3-phosphate + L-serine = D-glyceraldehyde 3-phosphate + L-tryptophan + H2O. It functions in the pathway amino-acid biosynthesis; L-tryptophan biosynthesis; L-tryptophan from chorismate: step 5/5. The beta subunit is responsible for the synthesis of L-tryptophan from indole and L-serine. The chain is Tryptophan synthase beta chain from Bacillus cereus (strain Q1).